Here is a 203-residue protein sequence, read N- to C-terminus: dATP triphosphohydrolase (203 aa).

R17 contributes to the dATP binding site. Co(2+) is bound by residues H31, H73, D74, E77, D82, and D130.

Belongs to the Caudovirales dATP triphosphohydrolase family. Co(2+) is required as a cofactor.

It catalyses the reaction dATP + H2O = 2'-deoxyadenosine + triphosphate + H(+). The catalysed reaction is dADP + H2O = 2'-deoxyadenosine + diphosphate. It carries out the reaction dAMP + H2O = 2'-deoxyadenosine + phosphate. Functionally, catalyzes the hydrolysis of dATP, dADP and dAMP into dA. This step is essential for Z-genome synthesis (containing aminoadenine instead of adenine). Specifically removes dATP and its precursor dADP from the nucleotide pool of the host, preventing the incorporation of A into the phage genome and favoring the integration of the Z-base into the viral genome. The chain is dATP triphosphohydrolase (datZ) from Acinetobacter phage SH-Ab 15497.